The following is a 213-amino-acid chain: uncharacterized protein (213 aa).

Residues Ser-2–Val-91 enclose the CS domain. The segment at Gly-168–Ser-213 is disordered. Acidic residues predominate over residues Asp-176–Glu-187. Positions Val-188 to Ser-213 are enriched in basic and acidic residues.

This sequence belongs to the p23/wos2 family.

This is an uncharacterized protein from Oryza sativa subsp. japonica (Rice).